A 293-amino-acid chain; its full sequence is Ribosomal protein L11 methyltransferase (293 aa).

Residues T145, G166, D188, and N230 each contribute to the S-adenosyl-L-methionine site.

This sequence belongs to the methyltransferase superfamily. PrmA family.

Its subcellular location is the cytoplasm. It carries out the reaction L-lysyl-[protein] + 3 S-adenosyl-L-methionine = N(6),N(6),N(6)-trimethyl-L-lysyl-[protein] + 3 S-adenosyl-L-homocysteine + 3 H(+). Functionally, methylates ribosomal protein L11. The protein is Ribosomal protein L11 methyltransferase of Escherichia coli O139:H28 (strain E24377A / ETEC).